Here is a 337-residue protein sequence, read N- to C-terminus: NADH-quinone oxidoreductase subunit H (337 aa).

9 helical membrane passes run 9 to 29, 50 to 70, 82 to 102, 115 to 135, 161 to 181, 186 to 206, 245 to 265, 273 to 293, and 313 to 333; these read GIPL…LLLV, PNVV…KFVF, GIFL…WAVI, VGIL…IMAG, IGFV…TAIV, TIWY…SALA, SILL…LPPI, VPGV…FAMV, and FLPI…GFDI.

This sequence belongs to the complex I subunit 1 family. In terms of assembly, NDH-1 is composed of 14 different subunits. Subunits NuoA, H, J, K, L, M, N constitute the membrane sector of the complex.

It is found in the cell inner membrane. It catalyses the reaction a quinone + NADH + 5 H(+)(in) = a quinol + NAD(+) + 4 H(+)(out). Functionally, NDH-1 shuttles electrons from NADH, via FMN and iron-sulfur (Fe-S) centers, to quinones in the respiratory chain. The immediate electron acceptor for the enzyme in this species is believed to be ubiquinone. Couples the redox reaction to proton translocation (for every two electrons transferred, four hydrogen ions are translocated across the cytoplasmic membrane), and thus conserves the redox energy in a proton gradient. This subunit may bind ubiquinone. The chain is NADH-quinone oxidoreductase subunit H from Parvibaculum lavamentivorans (strain DS-1 / DSM 13023 / NCIMB 13966).